We begin with the raw amino-acid sequence, 258 residues long: MILDKIIAQTKKDLDNRKNSNDFNKFLAQKRDFRDVKKALKATPDNPYRIIAEVKKASPSKGIIKEDFNPVEIAKEYIEVADAMSILTEPHFFQGSLEYLKEINKFSPIPLLRKDFIIDEFQIAEAYAAGADFILLIAKALDVSTLKRLYDFAKNTGLEVLFEIHDEEDLQKGLEVGADIIGFNHRNLETFEMDMDLSKKLIPKLPKNVIVVAESGINDFETVKKLSRNGVDAYLVGEHFMRQDNIKKAVLTLKGKTE.

It belongs to the TrpC family.

The catalysed reaction is 1-(2-carboxyphenylamino)-1-deoxy-D-ribulose 5-phosphate + H(+) = (1S,2R)-1-C-(indol-3-yl)glycerol 3-phosphate + CO2 + H2O. It functions in the pathway amino-acid biosynthesis; L-tryptophan biosynthesis; L-tryptophan from chorismate: step 4/5. This chain is Indole-3-glycerol phosphate synthase, found in Nautilia profundicola (strain ATCC BAA-1463 / DSM 18972 / AmH).